The following is a 336-amino-acid chain: Dihydroorotate dehydrogenase (quinone) (336 aa).

Residues 62–66 (AGLDK) and T86 each bind FMN. K66 lines the substrate pocket. Position 111–115 (111–115 (NRMGF)) interacts with substrate. Positions 139 and 172 each coordinate FMN. Residue N172 participates in substrate binding. The active-site Nucleophile is the S175. Position 177 (N177) interacts with substrate. FMN contacts are provided by K217 and T245. 246–247 (NT) contributes to the substrate binding site. Residues G268, G297, and 318-319 (YS) contribute to the FMN site.

It belongs to the dihydroorotate dehydrogenase family. Type 2 subfamily. In terms of assembly, monomer. Requires FMN as cofactor.

The protein localises to the cell membrane. It catalyses the reaction (S)-dihydroorotate + a quinone = orotate + a quinol. Its pathway is pyrimidine metabolism; UMP biosynthesis via de novo pathway; orotate from (S)-dihydroorotate (quinone route): step 1/1. Functionally, catalyzes the conversion of dihydroorotate to orotate with quinone as electron acceptor. The sequence is that of Dihydroorotate dehydrogenase (quinone) from Aeromonas salmonicida (strain A449).